The primary structure comprises 254 residues: Alcohol dehydrogenase (254 aa).

Residue F10–L33 participates in NAD(+) binding. S138 serves as a coordination point for substrate. Y151 serves as the catalytic Proton acceptor.

Belongs to the short-chain dehydrogenases/reductases (SDR) family. Homodimer.

It catalyses the reaction a primary alcohol + NAD(+) = an aldehyde + NADH + H(+). It carries out the reaction a secondary alcohol + NAD(+) = a ketone + NADH + H(+). The chain is Alcohol dehydrogenase (Adh) from Drosophila flavomontana (Fruit fly).